Reading from the N-terminus, the 277-residue chain is 4-diphosphocytidyl-2-C-methyl-D-erythritol kinase (277 aa).

Lys-9 is an active-site residue. Residue Pro-91–Ser-101 coordinates ATP. Residue Asp-133 is part of the active site.

It belongs to the GHMP kinase family. IspE subfamily.

It catalyses the reaction 4-CDP-2-C-methyl-D-erythritol + ATP = 4-CDP-2-C-methyl-D-erythritol 2-phosphate + ADP + H(+). It participates in isoprenoid biosynthesis; isopentenyl diphosphate biosynthesis via DXP pathway; isopentenyl diphosphate from 1-deoxy-D-xylulose 5-phosphate: step 3/6. Functionally, catalyzes the phosphorylation of the position 2 hydroxy group of 4-diphosphocytidyl-2C-methyl-D-erythritol. In Acinetobacter baumannii (strain AB307-0294), this protein is 4-diphosphocytidyl-2-C-methyl-D-erythritol kinase.